Consider the following 172-residue polypeptide: Large ribosomal subunit protein uL10 (172 aa).

This sequence belongs to the universal ribosomal protein uL10 family. In terms of assembly, part of the ribosomal stalk of the 50S ribosomal subunit. The N-terminus interacts with L11 and the large rRNA to form the base of the stalk. The C-terminus forms an elongated spine to which L12 dimers bind in a sequential fashion forming a multimeric L10(L12)X complex.

Its function is as follows. Forms part of the ribosomal stalk, playing a central role in the interaction of the ribosome with GTP-bound translation factors. This is Large ribosomal subunit protein uL10 from Francisella tularensis subsp. tularensis (strain FSC 198).